We begin with the raw amino-acid sequence, 138 residues long: Sporulation-specific protein 13 (138 aa).

The segment covering 1 to 11 (MMSNSQISKLF) has biased composition (polar residues). The segment at 1 to 31 (MMSNSQISKLFSSISNKENSNENALKESTNK) is disordered. Low complexity predominate over residues 12–23 (SSISNKENSNEN). Positions 16 to 104 (NKENSNENAL…KRELDYLRAK (89 aa)) form a coiled coil.

As to quaternary structure, interacts with spo2.

The protein localises to the cytoplasm. It localises to the cytoskeleton. It is found in the microtubule organizing center. Its subcellular location is the spindle pole body. Involved in sporulation. Plays a significant role in modification of the spindle pole body prior to spore formation and is required for initiating forespore membrane formation. This Schizosaccharomyces pombe (strain 972 / ATCC 24843) (Fission yeast) protein is Sporulation-specific protein 13 (spo13).